Consider the following 365-residue polypeptide: 3-dehydroquinate synthase (365 aa).

Residues 106-110, 130-131, Lys142, Lys151, and 169-172 contribute to the NAD(+) site; these read GVIGD, TT, and FFAT. Zn(2+) is bound by residues Glu184, His247, and His264.

Belongs to the sugar phosphate cyclases superfamily. Dehydroquinate synthase family. Co(2+) is required as a cofactor. Requires Zn(2+) as cofactor. NAD(+) serves as cofactor.

It localises to the cytoplasm. The catalysed reaction is 7-phospho-2-dehydro-3-deoxy-D-arabino-heptonate = 3-dehydroquinate + phosphate. It functions in the pathway metabolic intermediate biosynthesis; chorismate biosynthesis; chorismate from D-erythrose 4-phosphate and phosphoenolpyruvate: step 2/7. Its function is as follows. Catalyzes the conversion of 3-deoxy-D-arabino-heptulosonate 7-phosphate (DAHP) to dehydroquinate (DHQ). This chain is 3-dehydroquinate synthase, found in Listeria monocytogenes serotype 4a (strain HCC23).